A 216-amino-acid polypeptide reads, in one-letter code: Glycerol-3-phosphate acyltransferase 3 (216 aa).

The next 5 membrane-spanning stretches (helical) occupy residues L6–S26, L58–I78, I92–F112, F125–I145, and I158–P178.

It belongs to the PlsY family. In terms of assembly, probably interacts with PlsX.

Its subcellular location is the cell membrane. It carries out the reaction an acyl phosphate + sn-glycerol 3-phosphate = a 1-acyl-sn-glycero-3-phosphate + phosphate. It functions in the pathway lipid metabolism; phospholipid metabolism. Its function is as follows. Catalyzes the transfer of an acyl group from acyl-phosphate (acyl-PO(4)) to glycerol-3-phosphate (G3P) to form lysophosphatidic acid (LPA). This enzyme utilizes acyl-phosphate as fatty acyl donor, but not acyl-CoA or acyl-ACP. In Dehalococcoides mccartyi (strain ATCC BAA-2266 / KCTC 15142 / 195) (Dehalococcoides ethenogenes (strain 195)), this protein is Glycerol-3-phosphate acyltransferase 3.